Consider the following 363-residue polypeptide: 43 kDa protein (363 aa).

This Lepidoptera (butterflies and moths) protein is 43 kDa protein (P43).